We begin with the raw amino-acid sequence, 222 residues long: Cytidylate kinase (222 aa).

ATP is bound at residue G7–T15.

Belongs to the cytidylate kinase family. Type 1 subfamily.

The protein localises to the cytoplasm. The enzyme catalyses CMP + ATP = CDP + ADP. The catalysed reaction is dCMP + ATP = dCDP + ADP. The sequence is that of Cytidylate kinase from Aquifex aeolicus (strain VF5).